A 515-amino-acid polypeptide reads, in one-letter code: Vacuolar fusion protein CCZ1 homolog A (515 aa).

It belongs to the CCZ1 family. Interacts with MON1.

The protein localises to the endosome. Its subcellular location is the prevacuolar compartment. In terms of biological role, plays an important role in membrane trafficking through the secretory apparatus. In complex with MON1, acts as a guanine exchange factor (GEF) for RABG3F of the Rab7 protein family. Promotes the exchange of GDP to GTP, converting RABG3F from an inactive GDP-bound form into an active GTP-bound form. The RABG3F active form is involved in protein trafficking from prevacuolar compartments (PVCs) to vacuoles. May serve as a linker between Rab5 and Rab7 protein families in PVCs and mediate PVC maturation. The polypeptide is Vacuolar fusion protein CCZ1 homolog A (Arabidopsis thaliana (Mouse-ear cress)).